An 88-amino-acid chain; its full sequence is Mitochondrial import inner membrane translocase subunit Tim10 (88 aa).

A Twin CX3C motif motif is present at residues 29 to 54 (CHRKCVPPHYKEAELSKGEAVCLDRC). 2 disulfide bridges follow: C29/C54 and C33/C50.

Belongs to the small Tim family. Heterohexamer; composed of 3 copies of TIMM9 and 3 copies of TIMM10/TIM10A, named soluble 70 kDa complex. The complex forms a 6-bladed alpha-propeller structure and associates with the TIMM22 component of the TIM22 complex. Interacts with multi-pass transmembrane proteins in transit.

It localises to the mitochondrion inner membrane. In terms of biological role, mitochondrial intermembrane chaperone that participates in the import and insertion of multi-pass transmembrane proteins into the mitochondrial inner membrane. May also be required for the transfer of beta-barrel precursors from the TOM complex to the sorting and assembly machinery (SAM complex) of the outer membrane. Acts as a chaperone-like protein that protects the hydrophobic precursors from aggregation and guide them through the mitochondrial intermembrane space. The polypeptide is Mitochondrial import inner membrane translocase subunit Tim10 (timm10) (Danio rerio (Zebrafish)).